The primary structure comprises 530 residues: UDP-glucuronosyltransferase 1A10 (530 aa).

An N-terminal signal peptide occupies residues 1–25 (MARAGWTSPVPLCVCLLLTCGFAEA). Asn71, Asn292, and Asn344 each carry an N-linked (GlcNAc...) asparagine glycan. A helical transmembrane segment spans residues 488–504 (VIGFLLAVVLTVAFITF).

The protein belongs to the UDP-glycosyltransferase family. As to quaternary structure, homodimer. Homooligomer. Interacts with UGT1A1, UGT1A3, UGT1A4, UGT1A6, UGT1A7, UGT1A8 and UGT1A9 to form heterodimers. Isoform 1 interacts with isoform 2/i2 suggesting that oligomerization is involved in negative regulation of transferase activity by isoform 2. Isoform 1 also interacts with respective i2 isoforms of UGT1A1, UGT1A3, UGT1A4, UGT1A6, UGT1A7, UGT1A8 and UGT1A9. In terms of tissue distribution, liver and colon. Isoform 1 and isoform 2 are expressed in colon, esophagus and small intestine; isoform 2 but not isoform 1 is expressed in liver or kidney.

The protein localises to the endoplasmic reticulum membrane. The enzyme catalyses glucuronate acceptor + UDP-alpha-D-glucuronate = acceptor beta-D-glucuronoside + UDP + H(+). It carries out the reaction 17beta-estradiol + UDP-alpha-D-glucuronate = 17beta-estradiol 3-O-(beta-D-glucuronate) + UDP + H(+). The catalysed reaction is 17beta-estradiol + UDP-alpha-D-glucuronate = 17beta-estradiol 17-O-(beta-D-glucuronate) + UDP + H(+). It catalyses the reaction 17alpha-estradiol + UDP-alpha-D-glucuronate = 17alpha-estradiol 3-O-(beta-D-glucuronate) + UDP + H(+). The enzyme catalyses 16alpha,17beta-estriol + UDP-alpha-D-glucuronate = 16alpha,17beta-estriol 3-O-(beta-D-glucuronate) + UDP + H(+). It carries out the reaction 16beta,17beta-estriol + UDP-alpha-D-glucuronate = 16beta,17beta-estriol 3-O-(beta-D-glucuronate) + UDP + H(+). The catalysed reaction is 16alpha,17alpha-estriol + UDP-alpha-D-glucuronate = 16alpha,17alpha-estriol 3-O-(beta-D-glucuronate) + UDP + H(+). It catalyses the reaction 16alpha-hydroxyestrone + UDP-alpha-D-glucuronate = 16alpha-hydroxyestrone 3-O-(beta-D-glucuronate) + UDP + H(+). The enzyme catalyses estrone + UDP-alpha-D-glucuronate = estrone 3-O-(beta-D-glucuronate) + UDP + H(+). It carries out the reaction prunetin + UDP-alpha-D-glucuronate = prunetin-4'-O-beta-D-glucuronide + UDP. The catalysed reaction is (5Z,8Z,11Z,14Z)-eicosatetraenoate + UDP-alpha-D-glucuronate = O-[(5Z),(8Z),(11Z),(14Z)-eicosatetraenoyl]-beta-D-glucuronate + UDP. It catalyses the reaction 15-hydroxy-(5Z,8Z,11Z,13E)-eicosatetraenoate + UDP-alpha-D-glucuronate = 15-O-(beta-D-glucuronosyl)-(5Z,8Z,11Z,14Z)-eicosatetraenoate + UDP + H(+). The enzyme catalyses prostaglandin B1 + UDP-alpha-D-glucuronate = 15-O-(beta-D-glucuronosyl)-prostaglandin B1 + UDP + H(+). It carries out the reaction (E)-ferulate + UDP-alpha-D-glucuronate = (E)-4-O-(beta-D-glucuronosyl)-ferulate + UDP + H(+). The catalysed reaction is (E)-ferulate + UDP-alpha-D-glucuronate = (E)-ferulic acid beta-D-glucuronate ester + UDP. It catalyses the reaction losartan + UDP-alpha-D-glucuronate = losartan-2-N-beta-D-glucuronide + UDP. The enzyme catalyses candesartan + UDP-alpha-D-glucuronate = candesartan O-beta-D-glucuronoside + UDP. It carries out the reaction candesartan + UDP-alpha-D-glucuronate = candesartan-2-N-beta-D-glucuronide + UDP. The catalysed reaction is zolasartan + UDP-alpha-D-glucuronate = zolarsartan-1-N-beta-D-glucuronide + UDP. In terms of biological role, UDP-glucuronosyltransferase (UGT) that catalyzes phase II biotransformation reactions in which lipophilic substrates are conjugated with glucuronic acid to increase the metabolite's water solubility, thereby facilitating excretion into either the urine or bile. Essential for the elimination and detoxification of drugs, xenobiotics and endogenous compounds. Catalyzes the glucuronidation of endogenous estrogen hormones such as estradiol, estrone and estriol. Involved in the glucuronidation of arachidonic acid (AA) and AA-derived eicosanoids including 15-HETE and PGB1. Involved in the glucuronidation of the phytochemical ferulic acid at the phenolic or the carboxylic acid group. Also catalyzes the glucuronidation of the isoflavones genistein, daidzein, glycitein, formononetin, biochanin A and prunetin, which are phytoestrogens with anticancer and cardiovascular properties. Involved in the glucuronidation of the AGTR1 angiotensin receptor antagonist losartan, caderastan and zolarsatan, drugs which can inhibit the effect of angiotensin II. Its function is as follows. Lacks UGT glucuronidation activity but acts as a negative regulator of isoform 1. The sequence is that of UDP-glucuronosyltransferase 1A10 from Homo sapiens (Human).